Here is a 336-residue protein sequence, read N- to C-terminus: Biotin synthase (336 aa).

The Radical SAM core domain maps to 54–281 (NAIQLSTLLS…KAMVRLSAGR (228 aa)). [4Fe-4S] cluster contacts are provided by Cys69, Cys73, and Cys76. [2Fe-2S] cluster contacts are provided by Cys113, Cys144, Cys204, and Arg276.

Belongs to the radical SAM superfamily. Biotin synthase family. Homodimer. [4Fe-4S] cluster is required as a cofactor. Requires [2Fe-2S] cluster as cofactor.

It catalyses the reaction (4R,5S)-dethiobiotin + (sulfur carrier)-SH + 2 reduced [2Fe-2S]-[ferredoxin] + 2 S-adenosyl-L-methionine = (sulfur carrier)-H + biotin + 2 5'-deoxyadenosine + 2 L-methionine + 2 oxidized [2Fe-2S]-[ferredoxin]. Its pathway is cofactor biosynthesis; biotin biosynthesis; biotin from 7,8-diaminononanoate: step 2/2. Its function is as follows. Catalyzes the conversion of dethiobiotin (DTB) to biotin by the insertion of a sulfur atom into dethiobiotin via a radical-based mechanism. This is Biotin synthase from Burkholderia thailandensis (strain ATCC 700388 / DSM 13276 / CCUG 48851 / CIP 106301 / E264).